Here is an 831-residue protein sequence, read N- to C-terminus: V-type proton ATPase 116 kDa subunit a1 (831 aa).

Topologically, residues 1-388 (MGELFRSEEM…DAYGIGSYRE (388 aa)) are cytoplasmic. A helical membrane pass occupies residues 389–407 (INPAPYTIITFPFLFAVMF). Residues 408–409 (GD) lie on the Vacuolar side of the membrane. The chain crosses the membrane as a helical span at residues 410 to 426 (FGHGILMTLFAVWMVVR). Residues 427–441 (ESRILSQKIDNELFS) are Cytoplasmic-facing. A helical transmembrane segment spans residues 442–471 (MMFSGRYIILLMGLFSTYTGLIYNDCFSKA). The Vacuolar segment spans residues 472–534 (LNLFGSSWSV…ATNKLTFLNS (63 aa)). Residues 535–554 (FKMKMSVILGIIHMIFGVAL) traverse the membrane as a helical segment. Topologically, residues 555 to 572 (SVLNHIYFKKPLNIYLSF) are cytoplasmic. Residues 573 to 593 (IPEMIFMTTLFGYLVILIIYK) form a helical membrane-spanning segment. The Vacuolar segment spans residues 594–638 (WCAYDVSTSMVAPSLLIHFINMFLFSYQDTSLPMLYKGQMGLQCF). A helical membrane pass occupies residues 639–658 (LVVCAIICVPWMLVLKPLIL). Residues 659-718 (RRQYLRRKHLGTHNFGGIRVGNGPTEEDAEIIQHDQLSMHSDEEEEFDFGDTVVHQAIHT) are Cytoplasmic-facing. The helical transmembrane segment at 719 to 743 (IEYCLGCISNTASYLRLWALSLAHA) threads the bilayer. Topologically, residues 744 to 764 (QLSEVLWTMVMHIGLNIRSLG) are vacuolar. Residues 765–803 (GGIALVFIFSAFATLTIAILLIMEGLSAFLHALRLHWVE) traverse the membrane as a helical segment. The Cytoplasmic segment spans residues 804 to 831 (FRNKFYMGTGFKFLPFSFETIWEGKFDD).

This sequence belongs to the V-ATPase 116 kDa subunit family. V-ATPase is a heteromultimeric enzyme made up of two complexes: the ATP-hydrolytic V1 complex and the proton translocation V0 complex. The V1 complex consists of three catalytic AB heterodimers that form a heterohexamer, three peripheral stalks each consisting of EG heterodimers, one central rotor including subunits D and F, and the regulatory subunits C and H. The proton translocation complex V0 consists of the proton transport subunit a, a ring of proteolipid subunits c9c'', rotary subunit d, subunits e and f, and two accessory subunits.

It is found in the cytoplasmic vesicle. It localises to the clathrin-coated vesicle membrane. Its subcellular location is the secretory vesicle. The protein localises to the synaptic vesicle membrane. The protein resides in the melanosome. Its function is as follows. Subunit of the V0 complex of vacuolar(H+)-ATPase (V-ATPase), a multisubunit enzyme composed of a peripheral complex (V1) that hydrolyzes ATP and a membrane integral complex (V0) that translocates protons. V-ATPase is responsible for acidifying and maintaining the pH of intracellular compartments and in some cell types, is targeted to the plasma membrane, where it is responsible for acidifying the extracellular environment. Required for assembly and activity of the vacuolar ATPase. This is V-type proton ATPase 116 kDa subunit a1 (atp6v0a1) from Xenopus laevis (African clawed frog).